Reading from the N-terminus, the 360-residue chain is Phospho-N-acetylmuramoyl-pentapeptide-transferase (360 aa).

Transmembrane regions (helical) follow at residues 25–45 (RAIL…PTLI), 73–93 (TMGG…WADL), 97–117 (YVWV…VDDY), 128–148 (LIAK…AVYL), 168–188 (VMPQ…VGTS), 199–219 (GLAI…AYVS), 236–256 (TAEL…FLWF), 262–282 (LVFM…IIAI), 288–308 (LVLF…MLQV), and 338–358 (VIVR…ATLK).

The protein belongs to the glycosyltransferase 4 family. MraY subfamily. It depends on Mg(2+) as a cofactor.

The protein localises to the cell inner membrane. The catalysed reaction is UDP-N-acetyl-alpha-D-muramoyl-L-alanyl-gamma-D-glutamyl-meso-2,6-diaminopimeloyl-D-alanyl-D-alanine + di-trans,octa-cis-undecaprenyl phosphate = di-trans,octa-cis-undecaprenyl diphospho-N-acetyl-alpha-D-muramoyl-L-alanyl-D-glutamyl-meso-2,6-diaminopimeloyl-D-alanyl-D-alanine + UMP. It functions in the pathway cell wall biogenesis; peptidoglycan biosynthesis. Catalyzes the initial step of the lipid cycle reactions in the biosynthesis of the cell wall peptidoglycan: transfers peptidoglycan precursor phospho-MurNAc-pentapeptide from UDP-MurNAc-pentapeptide onto the lipid carrier undecaprenyl phosphate, yielding undecaprenyl-pyrophosphoryl-MurNAc-pentapeptide, known as lipid I. This chain is Phospho-N-acetylmuramoyl-pentapeptide-transferase, found in Idiomarina loihiensis (strain ATCC BAA-735 / DSM 15497 / L2-TR).